A 576-amino-acid chain; its full sequence is Zinc finger protein 791 (576 aa).

In terms of domain architecture, KRAB spans 4-90 (VAFEDVSVSF…AENFSPNLSV (87 aa)). C2H2-type zinc fingers lie at residues 100–122 (YECT…MRSH), 132–154 (YKCK…ERSH), 160–182 (YKCK…ERTH), 188–210 (YECK…ERIH), 216–238 (YECK…ERTH), 244–266 (YACK…MITH), 272–294 (YKCK…ERIH), 300–322 (YKCK…ERIH), 328–350 (YKCK…VRVH), 356–378 (YKCK…ERTH), 384–406 (YECK…KRNH), 412–434 (YECK…MITH), 440–462 (YKCR…ERTH), 468–490 (YECK…KRTH), 496–518 (YECK…MRMH), 524–546 (YKCK…TRIH), and 552–574 (LECK…MRMH).

Belongs to the krueppel C2H2-type zinc-finger protein family.

It is found in the nucleus. In terms of biological role, may be involved in transcriptional regulation. In Homo sapiens (Human), this protein is Zinc finger protein 791 (ZNF791).